Here is a 262-residue protein sequence, read N- to C-terminus: Flap endonuclease Xni (262 aa).

D105 lines the Mg(2+) pocket. Residues 162–259 (ERSQFLDLMA…VIDSQPEKTI (98 aa)) form the 5'-3' exonuclease domain. 5 residues coordinate K(+): L172, A173, P181, I183, and I186. Residues 185 to 190 (GIGPKS) are interaction with DNA.

It belongs to the Xni family. Requires Mg(2+) as cofactor. K(+) serves as cofactor.

Has flap endonuclease activity. During DNA replication, flap endonucleases cleave the 5'-overhanging flap structure that is generated by displacement synthesis when DNA polymerase encounters the 5'-end of a downstream Okazaki fragment. This chain is Flap endonuclease Xni, found in Shewanella baltica (strain OS185).